We begin with the raw amino-acid sequence, 545 residues long: 2-succinyl-5-enolpyruvyl-6-hydroxy-3-cyclohexene-1-carboxylate synthase (545 aa).

The interval 184–209 (PLVPDPEPHGAPTPAGRPGGRPWTYT) is disordered. Low complexity predominate over residues 195-205 (PTPAGRPGGRP).

It belongs to the TPP enzyme family. MenD subfamily. Homodimer. Requires Mg(2+) as cofactor. The cofactor is Mn(2+). It depends on thiamine diphosphate as a cofactor.

It catalyses the reaction isochorismate + 2-oxoglutarate + H(+) = 5-enolpyruvoyl-6-hydroxy-2-succinyl-cyclohex-3-ene-1-carboxylate + CO2. It functions in the pathway quinol/quinone metabolism; 1,4-dihydroxy-2-naphthoate biosynthesis; 1,4-dihydroxy-2-naphthoate from chorismate: step 2/7. Its pathway is quinol/quinone metabolism; menaquinone biosynthesis. In terms of biological role, catalyzes the thiamine diphosphate-dependent decarboxylation of 2-oxoglutarate and the subsequent addition of the resulting succinic semialdehyde-thiamine pyrophosphate anion to isochorismate to yield 2-succinyl-5-enolpyruvyl-6-hydroxy-3-cyclohexene-1-carboxylate (SEPHCHC). This Mycobacterium avium (strain 104) protein is 2-succinyl-5-enolpyruvyl-6-hydroxy-3-cyclohexene-1-carboxylate synthase.